Here is a 367-residue protein sequence, read N- to C-terminus: uncharacterized protein (367 aa).

Residues arginine 333–serine 367 form a disordered region. A compositionally biased stretch (low complexity) spans alanine 341–glutamine 351.

This is an uncharacterized protein from Amazona oratrix (yellow-headed parrot).